Reading from the N-terminus, the 286-residue chain is ATP synthase gamma chain (286 aa).

This sequence belongs to the ATPase gamma chain family. As to quaternary structure, F-type ATPases have 2 components, CF(1) - the catalytic core - and CF(0) - the membrane proton channel. CF(1) has five subunits: alpha(3), beta(3), gamma(1), delta(1), epsilon(1). CF(0) has three main subunits: a, b and c.

The protein resides in the cell inner membrane. In terms of biological role, produces ATP from ADP in the presence of a proton gradient across the membrane. The gamma chain is believed to be important in regulating ATPase activity and the flow of protons through the CF(0) complex. This chain is ATP synthase gamma chain, found in Shewanella amazonensis (strain ATCC BAA-1098 / SB2B).